The following is a 708-amino-acid chain: MTHPNLLVELFVEELPPKALQKLGDAFAGVLLAQLQAQGLASAASRVTAYASPRRLAAHVTEVAPQAADKAVSQKLMPVTVGLDASGNATPALLKKLAALGADASAVPGLRRAPDGKAEALFLDSTVRGATLSEGLQKALQESVAKLPIPKVMRYQLSSGCEQPGWTSVSFVRPAHGLVALHGTEVLLSVSVLGLTAGNATHGHRFEAAVDPVVIRSADTYAQQLAEEGAVIAAFADRRAEIARQLQAAAEQVGGGVRPIQDDALLDEVTALVERPNVLVCEFEKQFLDVPQECLILTMKANQKYFPLLDAEGRLTHRFLVVSNIRPDDASAVVGGNERVVRPRLADAKFFFDQDRKKTLESRVASLAKVVYHNQLGTQGERVERVRAIARAIAQQIGDVELARQADQAAQLAKADLVTDMVGEFPELQGTMGRYYAQADGLPAEVADAIEDHYKPRFAGDTLPRGDVGVVVALADKLETLVGMFGIGNLPTGDRDPFALRRHALGVIRMLVEKELPLDLETLLHSALPAFGDKIQDPTASLADFIYDRLAGSLREQGYSAQEVDAVLALRPQRLALVGKQLAAVRAFAALPEAPALAAANKRVTNILKKAGDVDAHVNPDLLREQAEKDLYAALQRFVPEADALFAAGDYTGSLQTLAVLRAPVDAFFDDVMVNAEELDLRLNRQGLLQSLHVAMNRVADLSRLAVA.

Belongs to the class-II aminoacyl-tRNA synthetase family. As to quaternary structure, tetramer of two alpha and two beta subunits.

It localises to the cytoplasm. It carries out the reaction tRNA(Gly) + glycine + ATP = glycyl-tRNA(Gly) + AMP + diphosphate. This chain is Glycine--tRNA ligase beta subunit, found in Paracidovorax citrulli (strain AAC00-1) (Acidovorax citrulli).